The chain runs to 126 residues: Probable prefoldin subunit 4 (126 aa).

It belongs to the prefoldin subunit beta family. Heterohexamer of two PFD-alpha type and four PFD-beta type subunits.

Binds specifically to cytosolic chaperonin (c-CPN) and transfers target proteins to it. Binds to nascent polypeptide chain and promotes folding in an environment in which there are many competing pathways for nonnative proteins. The protein is Probable prefoldin subunit 4 (pfd-4) of Caenorhabditis elegans.